Consider the following 472-residue polypeptide: POU domain, class 5, transcription factor 1 (472 aa).

Disordered stretches follow at residues 127–154 (MPSEVKTEKDVEEYGNEENKPPSQYHLT) and 187–255 (ISQA…LTTE). A compositionally biased stretch (polar residues) spans 220 to 234 (TAQNIPSAQAQSAPR). Positions 235 to 245 (SSGSSSGGCSN) are enriched in low complexity. Residues 246–255 (SEEEETLTTE) are compositionally biased toward acidic residues. Residues 249 to 323 (EETLTTEDLE…LLQRWLNEAE (75 aa)) enclose the POU-specific domain. A DNA-binding region (homeobox) is located at residues 343 to 402 (KRKRRTSLEGTVRSALESYFVKCPKPNTLEITHISDDLGLERDVVRVWFCNRRQKGKRLA).

The protein belongs to the POU transcription factor family. Class-7 subfamily.

The protein resides in the nucleus. In terms of biological role, involved in early development of embryos, especially in the process of gastrulation. May play an important role in establishing and specifying rhombomeric segments. Seems to be required to maintain the cells in a highly undifferentiated state. In contrast to POU2, T-POU2 lacks DNA-binding activity because of its incomplete pou domain structure. Overexpression of POU2 does not have any effect on development, whereas overexpression of t-POU2 causes developmental retardation or arrest before gastrulation. This chain is POU domain, class 5, transcription factor 1 (pou5f1), found in Danio rerio (Zebrafish).